We begin with the raw amino-acid sequence, 113 residues long: PTS system fructose-like EIIB component 3 (113 aa).

The PTS EIIB type-2 domain occupies 1 to 100 (MAYLVAVTAC…PQRVMSAVRK (100 aa)). Cys10 serves as the catalytic Phosphocysteine intermediate. At Cys10 the chain carries Phosphocysteine; by EIIA.

It is found in the cytoplasm. The enzyme catalyses D-fructose(out) + N(pros)-phospho-L-histidyl-[protein] = D-fructose 1-phosphate(in) + L-histidyl-[protein]. In terms of biological role, the phosphoenolpyruvate-dependent sugar phosphotransferase system (sugar PTS), a major carbohydrate active transport system, catalyzes the phosphorylation of incoming sugar substrates concomitantly with their translocation across the cell membrane. This chain is PTS system fructose-like EIIB component 3 (frwD), found in Escherichia coli (strain K12).